Consider the following 117-residue polypeptide: uncharacterized protein (117 aa).

The next 3 helical transmembrane spans lie at 32–52, 56–76, and 87–107; these read VSSS…VTVV, VGVA…VTLL, and LSWC…SFFF.

It localises to the membrane. This is an uncharacterized protein from Saccharomyces cerevisiae (strain ATCC 204508 / S288c) (Baker's yeast).